The primary structure comprises 202 residues: MSRYRGPRVKIIRRLGALPGLTNKTLKLKSGYINQSTSNKKVSQYRIRLEEKQKLRFHYGLTERQLLKYVRIARKAKGSTGQVLLQLLEMRLDNIIFRLGMAPTIPGARQLVNHRHILINNNTVDIPSYNCKPKDVITIKDRSKSQSIIIKNLNSFQKQKIPNHLTFDLMQIKGLVNQIIDREWIYLKINELLVVEYYSRQV.

The region spanning 90 to 154 (MRLDNIIFRL…SQSIIIKNLN (65 aa)) is the S4 RNA-binding domain.

The protein belongs to the universal ribosomal protein uS4 family. In terms of assembly, part of the 30S ribosomal subunit. Contacts protein S5. The interaction surface between S4 and S5 is involved in control of translational fidelity.

Its subcellular location is the plastid. The protein resides in the chloroplast. In terms of biological role, one of the primary rRNA binding proteins, it binds directly to 16S rRNA where it nucleates assembly of the body of the 30S subunit. With S5 and S12 plays an important role in translational accuracy. The protein is Small ribosomal subunit protein uS4c (rps4) of Marchantia polymorpha (Common liverwort).